The sequence spans 241 residues: 1-Cys peroxiredoxin (241 aa).

Residues 33–189 form the Thioredoxin domain; the sequence is LRIGDVVPDF…IIRILDSFQL (157 aa). Residue Cys75 is the Cysteine sulfenic acid (-SOH) intermediate of the active site.

The protein belongs to the peroxiredoxin family. Prx6 subfamily. In terms of assembly, homodimer.

The enzyme catalyses a hydroperoxide + [thioredoxin]-dithiol = an alcohol + [thioredoxin]-disulfide + H2O. Functionally, thiol-specific peroxidase that catalyzes the reduction of hydrogen peroxide and organic hydroperoxides to water and alcohols, respectively. Plays a role in cell protection against oxidative stress by detoxifying peroxides. The sequence is that of 1-Cys peroxiredoxin from Dictyostelium discoideum (Social amoeba).